A 215-amino-acid polypeptide reads, in one-letter code: uncharacterized protein (215 aa).

Active-site charge relay system residues include S114, D162, and H194.

This sequence belongs to the AB hydrolase superfamily. AB hydrolase 2 family.

This is an uncharacterized protein from Rickettsia prowazekii (strain Madrid E).